A 205-amino-acid chain; its full sequence is ATP-dependent Clp protease proteolytic subunit (205 aa).

Ser-98 acts as the Nucleophile in catalysis. Residue His-123 is part of the active site.

It belongs to the peptidase S14 family. As to quaternary structure, fourteen ClpP subunits assemble into 2 heptameric rings which stack back to back to give a disk-like structure with a central cavity, resembling the structure of eukaryotic proteasomes.

It localises to the cytoplasm. It catalyses the reaction Hydrolysis of proteins to small peptides in the presence of ATP and magnesium. alpha-casein is the usual test substrate. In the absence of ATP, only oligopeptides shorter than five residues are hydrolyzed (such as succinyl-Leu-Tyr-|-NHMec, and Leu-Tyr-Leu-|-Tyr-Trp, in which cleavage of the -Tyr-|-Leu- and -Tyr-|-Trp bonds also occurs).. Its function is as follows. Cleaves peptides in various proteins in a process that requires ATP hydrolysis. Has a chymotrypsin-like activity. Plays a major role in the degradation of misfolded proteins. This is ATP-dependent Clp protease proteolytic subunit from Desulfosudis oleivorans (strain DSM 6200 / JCM 39069 / Hxd3) (Desulfococcus oleovorans).